A 752-amino-acid chain; its full sequence is MSFIDPYQHIIVEHQYSHKFTVVVLRATKVTKGTFGDMLDTPDPYVELFISTTPDSRKRTRHFNNDINPVWNETFEFILDPNQENVLEITLMDANYVMDETLGTATFPVSSMKVGEKKEVPFIFNQVTEMILEMSLEVCSCPDLRFSMALCDQEKTFRRQRKENIKENMKKLLGPKKSEGLYSTRDVPVVAILGSGGGFRAMVGFSGVMKALYESGILDCATYVAGLSGSTWYMSTLYSHPDFPEKGPEEINEELMKNVSHNPLLLLTPQKVKRYVESLWKKKSSGQPVTFTDIFGMLIGETLIQNRMSTTLSSLKEKVSAARCPLPLFTCLHVKPDVSELMFADWVEFSPYEIGMAKYGTFMTPDLFGSKFFMGTVVKKYEENPLHFLMGVWGSAFSILFNRVLGVSGSQNKGSTMEEELENITAKHIVSNDSSDSDDEAQGPKGTENEDAEREYQNDNQASWVHRMLMALVSDSALFNTREGRAGKEHNFMLGLNLNTSYPLSPLRDFSPQDSFDDDELDAAVADPDEFERIYEPLDVKSKKIHVVDSGLTFNLPYPLILRPQRGVDLIISFDFSARPSDTSPPFKELLLAEKWAKMNKLPFPKIDPYVFDREGLKECYVFKPKNPDVEKDCPTIIHFVLANINFRKYKAPGVLRETKEEKEIADFDIFDDPESPFSTFNFQYPNQAFKRLHDLMYFNTLNNIDVIKDAIVESIEYRRQNPSRCSVSLSNVEARKFFNKEFLSKPTAESI.

The segment at Met-1 to Ser-178 is phospholipid binding. Ser-2 carries the phosphoserine modification. The region spanning Pro-6 to Phe-122 is the C2 domain. Positions 40, 41, 43, 65, 93, 94, and 95 each coordinate Ca(2+). Residues Ser-140–Asn-740 form the PLA2c domain. The Nucleophile role is filled by Ser-228. At Thr-268 the chain carries Phosphothreonine. Residues Lys-427–Gln-457 are disordered. A phosphoserine mark is found at Ser-434, Ser-435, and Ser-437. Ser-505 carries the phosphoserine; by MAPK modification. Residues Ser-511 and Ser-515 each carry the phosphoserine modification. A Glycyl lysine isopeptide (Lys-Gly) (interchain with G-Cter in SUMO2) cross-link involves residue Lys-541. The Proton acceptor role is filled by Asp-549. Residue Lys-606 forms a Glycyl lysine isopeptide (Lys-Gly) (interchain with G-Cter in SUMO2) linkage. Phosphoserine is present on residues Ser-727 and Ser-729.

Interacts with KAT5. Post-translationally, phosphorylated at both Ser-505 and Ser-727 in response to mitogenic stimuli. In brain tissue, expressed in low levels in olfactory mitral and granule cells, in hippocampal pyramidal cells and in dentate and cerebellar granule cells.

The protein localises to the cytoplasm. The protein resides in the golgi apparatus membrane. It localises to the nucleus envelope. It carries out the reaction a 1,2-diacyl-sn-glycero-3-phosphocholine + H2O = a 1-acyl-sn-glycero-3-phosphocholine + a fatty acid + H(+). The catalysed reaction is a 1-O-alkyl-2-acyl-sn-glycero-3-phosphocholine + H2O = a 1-O-alkyl-sn-glycero-3-phosphocholine + a fatty acid + H(+). It catalyses the reaction a 1-acyl-sn-glycero-3-phosphocholine + H2O = sn-glycerol 3-phosphocholine + a fatty acid + H(+). The enzyme catalyses 1-hexadecanoyl-2-(5Z,8Z,11Z,14Z-eicosatetraenoyl)-sn-glycero-3-phosphocholine + H2O = 1-hexadecanoyl-sn-glycero-3-phosphocholine + (5Z,8Z,11Z,14Z)-eicosatetraenoate + H(+). It carries out the reaction 1,2-di-(5Z,8Z,11Z,14Z-eicosatetraenoyl)-sn-glycero-3-phosphocholine + H2O = 1-(5Z,8Z,11Z,14Z-eicosatetraenoyl)-sn-glycero-3-phosphocholine + (5Z,8Z,11Z,14Z)-eicosatetraenoate + H(+). The catalysed reaction is 1-octadecanoyl-2-(5Z,8Z,11Z,14Z-eicosatetraenoyl)-sn-glycero-3-phosphocholine + H2O = 1-octadecanoyl-sn-glycero-3-phosphocholine + (5Z,8Z,11Z,14Z)-eicosatetraenoate + H(+). It catalyses the reaction 1-hexadecanoyl-2-(9Z,12Z-octadecadienoyl)-sn-glycero-3-phosphocholine + H2O = (9Z,12Z)-octadecadienoate + 1-hexadecanoyl-sn-glycero-3-phosphocholine + H(+). The enzyme catalyses 1-octadecanoyl-2-(9Z,12Z,15Z-octadecatrienoyl)-sn-glycero-3-phosphocholine + H2O = (9Z,12Z,15Z)-octadecatrienoate + 1-octadecanoyl-sn-glycero-3-phosphocholine + H(+). It carries out the reaction 1-(5Z,8Z,11Z,14Z-eicosatetraenoyl)-2-hexadecanoyl-sn-glycero-3-phosphocholine + H2O = 1-(5Z,8Z,11Z,14Z-eicosatetraenoyl)-sn-glycero-3-phosphocholine + hexadecanoate + H(+). The catalysed reaction is 1-O-hexadecyl-2-(5Z,8Z,11Z,14Z)-eicosatetraenoyl-sn-glycero-3-phosphocholine + H2O = 1-O-hexadecyl-sn-glycero-3-phosphocholine + (5Z,8Z,11Z,14Z)-eicosatetraenoate + H(+). It catalyses the reaction 1,2-di-(9Z-octadecenoyl)-sn-glycero-3-phospho-(1'-sn-glycerol) + H2O = 1-(9Z-octadecenoyl)-sn-glycero-3-phospho-(1'-sn-glycerol) + (9Z)-octadecenoate + H(+). The enzyme catalyses 1-octadecanoyl-2-(5Z,8Z,11Z,14Z-eicosatetraenoyl)-sn-glycero-3-phosphate + H2O = 1-octadecanoyl-sn-glycero-3-phosphate + (5Z,8Z,11Z,14Z)-eicosatetraenoate + H(+). It carries out the reaction 1-hexadecanoyl-sn-glycero-3-phosphocholine + H2O = sn-glycerol 3-phosphocholine + hexadecanoate + H(+). The catalysed reaction is 2-(prostaglandin E2)-sn-glycero-3-phosphoethanolamine + H2O = sn-glycero-3-phosphoethanolamine + prostaglandin E2 + H(+). It catalyses the reaction 2-[(15S)-hydroxy-(5Z,8Z,11Z,13E)-eicosatetraenoyl]-sn-glycero-3-phosphocholine + H2O = (15S)-hydroxy-(5Z,8Z,11Z,13E)-eicosatetraenoate + sn-glycerol 3-phosphocholine + H(+). The enzyme catalyses 2-[(15R)-hydroxy-(5Z,8Z,11Z,13E)-eicosatetraenoyl]-sn-glycero-3-phosphocholine + H2O = (15R)-hydroxy-(5Z,8Z,11Z,13E)-eicosatetraenoate + sn-glycerol 3-phosphocholine + H(+). It carries out the reaction 2-(prostaglandin E2)-sn-glycero-3-phosphocholine + H2O = prostaglandin E2 + sn-glycerol 3-phosphocholine + H(+). The catalysed reaction is 2-[(11R)-hydroxy-(5Z,8Z,12E,14Z)-eicosatetraenoyl]-sn-glycero-3-phosphocholine + H2O = (11R)-hydroxy-(5Z,8Z,12E,14Z)-eicosatetraenoate + sn-glycerol 3-phosphocholine + H(+). It catalyses the reaction 1-(5Z,8Z,11Z,14Z-eicosatetraenoyl)-2-O-hexadecyl-sn-glycero-3-phosphocholine + H2O = 2-O-hexadecyl-sn-glycero-3-phosphocholine + (5Z,8Z,11Z,14Z)-eicosatetraenoate + H(+). The enzyme catalyses 1-octadecanoyl-2-(5Z,8Z,11Z,14Z-eicosatetraenoyl)-sn-glycero-3-phosphocholine + glycerol = 1-(5Z,8Z,11Z,14Z-eicosatetraenoyl)-glycerol + 1-octadecanoyl-sn-glycero-3-phosphocholine. It carries out the reaction 1-octadecanoyl-2-(9Z,12Z,15Z-octadecatrienoyl)-sn-glycero-3-phosphocholine + glycerol = 1-(9Z,12Z,15Z-octadecatrienoyl)-glycerol + 1-octadecanoyl-sn-glycero-3-phosphocholine. Its pathway is lipid metabolism; arachidonate metabolism. It participates in membrane lipid metabolism; glycerophospholipid metabolism. The protein operates within lipid metabolism; prostaglandin biosynthesis. It functions in the pathway lipid metabolism; leukotriene B4 biosynthesis. Activated by cytosolic calcium, which is necessary for binding to membrane lipids. Activated by phosphorylation in response to mitogenic stimuli. Has primarily calcium-dependent phospholipase and lysophospholipase activities, with a major role in membrane lipid remodeling and biosynthesis of lipid mediators of the inflammatory response. Plays an important role in embryo implantation and parturition through its ability to trigger prostanoid production. Preferentially hydrolyzes the ester bond of the fatty acyl group attached at sn-2 position of phospholipids (phospholipase A2 activity). Selectively hydrolyzes sn-2 arachidonoyl group from membrane phospholipids, providing the precursor for eicosanoid biosynthesis via the cyclooxygenase pathway. In an alternative pathway of eicosanoid biosynthesis, hydrolyzes sn-2 fatty acyl chain of eicosanoid lysophopholipids to release free bioactive eicosanoids. Hydrolyzes the ester bond of the fatty acyl group attached at sn-1 position of phospholipids (phospholipase A1 activity) only if an ether linkage rather than an ester linkage is present at the sn-2 position. This hydrolysis is not stereospecific. Has calcium-independent phospholipase A2 and lysophospholipase activities in the presence of phosphoinositides. Has O-acyltransferase activity. Catalyzes the transfer of fatty acyl chains from phospholipids to a primary hydroxyl group of glycerol (sn-1 or sn-3), potentially contributing to monoacylglycerol synthesis. This is Cytosolic phospholipase A2 (Pla2g4a) from Rattus norvegicus (Rat).